Consider the following 256-residue polypeptide: tRNA (guanine-N(7)-)-methyltransferase (256 aa).

Residues 1–25 (MVATGGQAQDQSQNQEPDVLNPTSA) are disordered. S-adenosyl-L-methionine is bound by residues G79, 102 to 103 (EI), 137 to 138 (NA), and L157. D160 is an active-site residue. An S-adenosyl-L-methionine-binding site is contributed by 235–237 (SEE).

Belongs to the class I-like SAM-binding methyltransferase superfamily. TrmB family.

Its subcellular location is the nucleus. The enzyme catalyses guanosine(46) in tRNA + S-adenosyl-L-methionine = N(7)-methylguanosine(46) in tRNA + S-adenosyl-L-homocysteine. Its pathway is tRNA modification; N(7)-methylguanine-tRNA biosynthesis. Catalyzes the formation of N(7)-methylguanine at position 46 (m7G46) in tRNA. The protein is tRNA (guanine-N(7)-)-methyltransferase of Drosophila simulans (Fruit fly).